We begin with the raw amino-acid sequence, 314 residues long: Inosine-uridine preferring nucleoside hydrolase (314 aa).

Position 10 (aspartate 10) interacts with Ca(2+). Aspartate 14 provides a ligand contact to substrate. Ca(2+) contacts are provided by aspartate 15 and threonine 126. Substrate-binding residues include asparagine 160, glutamate 166, and asparagine 168. Residue histidine 240 is the Proton donor of the active site. Residue aspartate 241 coordinates Ca(2+).

Belongs to the IUNH family. As to quaternary structure, homotetramer. Ca(2+) serves as cofactor.

It catalyses the reaction inosine + H2O = hypoxanthine + D-ribose. The enzyme catalyses uridine + H2O = D-ribose + uracil. Its pathway is purine metabolism; purine nucleoside salvage. Is potently inhibited by immucillin A and immucillin ACAP, which are transition state inhibitors. Functionally, catalyzes the hydrolysis of the N-glycosidic bond of all of the commonly occurring purine and pyrimidine nucleosides into ribose and the associated base, but has a preference for inosine and uridine as substrates. Likely functions in purine salvage from the host, a fundamental pathway since protozoan parasites such as L.major are incapable of de novo purine biosynthesis. The chain is Inosine-uridine preferring nucleoside hydrolase (NSNH) from Leishmania major.